A 462-amino-acid polypeptide reads, in one-letter code: Nitrate/nitrite transporter NarU (462 aa).

Topologically, residues 1–35 are cytoplasmic; sequence MTRQNENYNRYLLSDWRPENPAFWENKGKGIARRN. The helical transmembrane segment at 36–56 threads the bilayer; the sequence is LWISVSCLLLAFCVWMLFSAV. The Periplasmic segment spans residues 57–71; the sequence is AVNLNKIGFNFTTDQ. Residues 72–92 form a helical membrane-spanning segment; that stretch reads LFLLTALPSLSGAILRVPYSF. Residues 93–101 are Cytoplasmic-facing; that stretch reads MVPLFGGRK. A helical membrane pass occupies residues 102 to 122; the sequence is WTVLSTVILIIPCAWLGFAVQ. The Periplasmic segment spans residues 123-124; it reads NP. The chain crosses the membrane as a helical span at residues 125 to 145; sequence ATPFGVFMLIALLCGFAGANF. The Cytoplasmic segment spans residues 146–180; it reads ASSMGNISFFFPKARQGSALGINGGLGNLGVSVMQ. Residues 181–201 traverse the membrane as a helical segment; it reads LIAPLVIFLPIFTFLGVQGVP. At 202–206 the chain is on the periplasmic side; sequence QPDGS. Residues 207 to 227 traverse the membrane as a helical segment; it reads LLALTNAAWIWVPLLAVATLA. At 228 to 258 the chain is on the cytoplasmic side; sequence AWFGMNDIGSSKASVASQLPVLKRLHLWLLS. Residues 259 to 279 form a helical membrane-spanning segment; the sequence is LLYLATFGSFIGFSAGFAMLA. Residues 280 to 287 lie on the Periplasmic side of the membrane; that stretch reads KTQFPDVN. Residues 288–308 form a helical membrane-spanning segment; it reads ILQLAFFGPFIGALARSAGGV. Residues 309-317 lie on the Cytoplasmic side of the membrane; it reads ISDKFGGVR. Residues 318-338 traverse the membrane as a helical segment; sequence VTLINFIFMALFTALLFLTLP. The Periplasmic portion of the chain corresponds to 339 to 341; the sequence is GSG. A helical membrane pass occupies residues 342–362; sequence AGSFSAFYLVFMGLFLTAGLG. Residues 363–401 lie on the Cytoplasmic side of the membrane; the sequence is SGSTFQMIAVIFRQITLYNVKLRGGSDEQAQREAVTDTA. A helical membrane pass occupies residues 402-422; that stretch reads AALGFISAIGAVGGFFIPKAF. Topologically, residues 423–432 are periplasmic; that stretch reads GTSLALTGSP. Residues 433–453 traverse the membrane as a helical segment; sequence VGAMKIFLLFYLACVLLTWLV. The Cytoplasmic segment spans residues 454 to 462; sequence YGRRKPKQQ.

It belongs to the major facilitator superfamily. Nitrate/nitrite porter (TC 2.A.1.8) family.

It is found in the cell inner membrane. Catalyzes nitrate uptake, nitrite uptake and nitrite export across the cytoplasmic membrane. This is Nitrate/nitrite transporter NarU (narU) from Salmonella typhimurium (strain LT2 / SGSC1412 / ATCC 700720).